Consider the following 654-residue polypeptide: MASITSRASARASCSQANTRAGRVALSGGALLRPARPARSFVPARKQQQGAVRRGGALSARASAVEDIRKVLSDSSSPVAGQKYDYILVGGGTAACVLANRLSADGSKRVLVLEAGPDNTSRDVKIPAAITRLFRSPLDWNLFSELQEQLAERQIYMARGRLLGGSSATNATLYHRGAAGDYDAWGVEGWSSEDVLSWFVQAETNADFGPGAYHGSGGPMRVENPRYTNKQLHTAFFKAAEEVGLTPNSDFNDWSHDHAGYGTFQVMQDKGTRADMYRQYLKPVLGRRNLQVLTGAAVTKVNIDQAAGKAQALGVEFSTDGPTGERLSAELAPGGEVIMCAGAVHTPFLLKHSGVGPSAELKEFGIPVVSNLAGVGQNLQDQPACLTAAPVKEKYDGIAISDHIYNEKGQIRKRAIASYLLGGRGGLTSTGCDRGAFVRTAGQALPDLQVRFVPGMALDPDGVSTYVRFAKFQSQGLKWPSGITMQLIACRPQSTGSVGLKSADPFAPPKLSPGYLTDKDGADLATLRKGIHWARDVARSSALSEYLDGELFPGSGVVSDDQIDEYIRRSIHSSNAITGTCKMGNAGDSSSVVDNQLRVHGVEGLRVVDASVVPKIPGGQTGAPVVMIAERAAALLTGKATIGASAAAPATVAA.

The transit peptide at 1 to 62 (MASITSRASA…RRGGALSARA (62 aa)) directs the protein to the chloroplast. Residues 93–94 (TA), Glu114, Leu162, Ser166, 170–173 (NATL), and Val298 contribute to the FAD site. Hexadecanoate contacts are provided by Cys432, Arg451, Tyr466, and Gln486. Gly622 provides a ligand contact to FAD.

Belongs to the GMC oxidoreductase family. FAD serves as cofactor.

The protein localises to the plastid. It is found in the chloroplast. The catalysed reaction is a long-chain fatty acid + hnu + H(+) = a long-chain alkane + CO2. It carries out the reaction hnu + hexadecanoate + H(+) = pentadecane + CO2. It catalyses the reaction hnu + octadecanoate + H(+) = heptadecane + CO2. The enzyme catalyses heptadecanoate + hnu + H(+) = hexadecane + CO2. The catalysed reaction is hnu + tetradecanoate + H(+) = tridecane + CO2. It carries out the reaction octanoate + hnu + H(+) = heptane + CO2. Activated by blue light and repressed by red light. Functionally, catalyzes the decarboxylation of free fatty acids to n-alkanes or n-alkenes in response to blue light. Substrate preference is toward fatty acids with C16 or C17 chains. Converts n-octanoic acid (C8 chain) more efficiently than palmitate (n-hexadecanoic acid, C16 chain) into n-heptane (C7 chain) and n-pentadecane (C15 chain), respectively, partly due to an autocatalytic effect of its n-heptane product. Saturated fatty acids are converted to alkanes, not alkenes. The decarboxylation is initiated through electron abstraction from the fatty acid by the photo-excited FAD. The sequence is that of Fatty acid photodecarboxylase, chloroplastic from Chlorella variabilis (Green alga).